The primary structure comprises 292 residues: ATP synthase gamma chain (292 aa).

This sequence belongs to the ATPase gamma chain family. F-type ATPases have 2 components, CF(1) - the catalytic core - and CF(0) - the membrane proton channel. CF(1) has five subunits: alpha(3), beta(3), gamma(1), delta(1), epsilon(1). CF(0) has three main subunits: a, b and c.

Its subcellular location is the cell membrane. Its function is as follows. Produces ATP from ADP in the presence of a proton gradient across the membrane. The gamma chain is believed to be important in regulating ATPase activity and the flow of protons through the CF(0) complex. The chain is ATP synthase gamma chain from Prosthecochloris aestuarii (strain DSM 271 / SK 413).